A 172-amino-acid chain; its full sequence is Translationally-controlled tumor protein (172 aa).

Residues 1 to 172 (MIIYRDLISH…FKDGLEMEKC (172 aa)) enclose the TCTP domain. Serine 46 bears the Phosphoserine; by PLK1 mark. Serine 53 carries the post-translational modification Phosphoserine. Phosphoserine; by PLK1 is present on serine 64. A required for reduction of TSC22D1 protein stability region spans residues 70–172 (VDIVMNHHLQ…FKDGLEMEKC (103 aa)).

It belongs to the TCTP family. In terms of assembly, homodimer. Interacts with STEAP3. Interacts with TSC22D1; interaction results in the destabilization of TSC22D1 protein.

Its subcellular location is the cytoplasm. Involved in calcium binding and microtubule stabilization. Acts as a negative regulator of TSC22D1-mediated apoptosis, via interaction with and destabilization of TSC22D1 protein. The sequence is that of Translationally-controlled tumor protein (TPT1) from Oryctolagus cuniculus (Rabbit).